We begin with the raw amino-acid sequence, 749 residues long: Soluble starch synthase 2-1, chloroplastic/amyloplastic (749 aa).

The transit peptide at 1-44 (MAAAAVSSLLAPSGSCYSPGCHSCWGPGPGGGRRLPSPRRRPIT) directs the protein to the chloroplast. K272 contributes to the ADP-alpha-D-glucose binding site.

Belongs to the glycosyltransferase 1 family. Bacterial/plant glycogen synthase subfamily. In terms of tissue distribution, expressed in endosperm, leaves, and weakly in roots.

It is found in the plastid. The protein resides in the amyloplast. The protein localises to the chloroplast. The enzyme catalyses [(1-&gt;4)-alpha-D-glucosyl](n) + ADP-alpha-D-glucose = [(1-&gt;4)-alpha-D-glucosyl](n+1) + ADP + H(+). The protein operates within glycan biosynthesis; starch biosynthesis. Its function is as follows. May be involved in starch synthesis in endosperm amyloplasts and contribute to the deposition of transient starch in chloroplasts of leaves. In Oryza sativa subsp. japonica (Rice), this protein is Soluble starch synthase 2-1, chloroplastic/amyloplastic (SSII-1).